The primary structure comprises 180 residues: Shikimate kinase (180 aa).

Residue 14–19 (GAGKSS) participates in ATP binding. S18 is a Mg(2+) binding site. Positions 36, 60, and 82 each coordinate substrate. Residue R120 participates in ATP binding. R139 contributes to the substrate binding site.

It belongs to the shikimate kinase family. In terms of assembly, monomer. The cofactor is Mg(2+).

The protein resides in the cytoplasm. The catalysed reaction is shikimate + ATP = 3-phosphoshikimate + ADP + H(+). It functions in the pathway metabolic intermediate biosynthesis; chorismate biosynthesis; chorismate from D-erythrose 4-phosphate and phosphoenolpyruvate: step 5/7. Functionally, catalyzes the specific phosphorylation of the 3-hydroxyl group of shikimic acid using ATP as a cosubstrate. This is Shikimate kinase from Xylella fastidiosa (strain M23).